Here is a 488-residue protein sequence, read N- to C-terminus: Intron-encoded DNA endonuclease I-AniI (488 aa).

Residues 1–169 form a cobA exon 1 encoded region; sequence MRILKSHPLL…DIVEFIWGGL (169 aa). The interval 170–488 is cobA intron encoded; the sequence is YTDEPQCGDV…SEKIKIPSNY (319 aa).

In the C-terminal section; belongs to the LAGLIDADG endonuclease family. In terms of assembly, homodimer. It depends on Mg(2+) as a cofactor. Post-translationally, the mature protein may arise from proteolytic cleavage of an in-frame translation of cobA exon 1 plus intron, containing the I-AniI open reading frame. Cleavage may take place close to Met-213 resulting in an active endonuclease/maturase of about 30 kDa.

Its subcellular location is the mitochondrion. Mitochondrial DNA endonuclease and mRNA maturase involved in intron homing and required for splicing of the cytochrome b (cobA) gene intron, containing its own coding sequence. The protein stimulates the intrinsic ribozyme activity of the intron through binding to and stabilizing specific secondary and tertiary structure elements in the RNA. As an endonuclease it introduces a specific double-strand break at the junction of the two exons the cobA gene and thus mediates the insertion of an intron, containing its own coding sequence (group I intron), into an intronless gene. Recognizes with limited specificity and cleaves the sequence 5'-GAGGAGGTTTCTCTGTA-3'. The proteins RNA and DNA recognition and binding surfaces are independent. The polypeptide is Intron-encoded DNA endonuclease I-AniI (I-AniI) (Emericella nidulans (Aspergillus nidulans)).